The sequence spans 454 residues: tRNA modification GTPase MnmE (454 aa).

Residues Arg-23, Glu-80, and Lys-120 each contribute to the (6S)-5-formyl-5,6,7,8-tetrahydrofolate site. In terms of domain architecture, TrmE-type G spans 216 to 377 (GMKVVIAGRP…LRNHLKQSMG (162 aa)). A K(+)-binding site is contributed by Asn-226. GTP contacts are provided by residues 226–231 (NAGKSS), 245–251 (TDIAGTT), 270–273 (DTAG), 335–338 (NKAD), and 358–360 (SAR). Mg(2+) is bound at residue Ser-230. K(+) contacts are provided by Thr-245, Ile-247, and Thr-250. Thr-251 serves as a coordination point for Mg(2+). Lys-454 is a binding site for (6S)-5-formyl-5,6,7,8-tetrahydrofolate.

This sequence belongs to the TRAFAC class TrmE-Era-EngA-EngB-Septin-like GTPase superfamily. TrmE GTPase family. In terms of assembly, homodimer. Heterotetramer of two MnmE and two MnmG subunits. K(+) serves as cofactor.

The protein resides in the cytoplasm. Exhibits a very high intrinsic GTPase hydrolysis rate. Involved in the addition of a carboxymethylaminomethyl (cmnm) group at the wobble position (U34) of certain tRNAs, forming tRNA-cmnm(5)s(2)U34. The polypeptide is tRNA modification GTPase MnmE (Shigella boydii serotype 18 (strain CDC 3083-94 / BS512)).